The following is a 346-amino-acid chain: Nicotinate-nucleotide--dimethylbenzimidazole phosphoribosyltransferase (346 aa).

E312 (proton acceptor) is an active-site residue.

The protein belongs to the CobT family.

The catalysed reaction is 5,6-dimethylbenzimidazole + nicotinate beta-D-ribonucleotide = alpha-ribazole 5'-phosphate + nicotinate + H(+). It functions in the pathway nucleoside biosynthesis; alpha-ribazole biosynthesis; alpha-ribazole from 5,6-dimethylbenzimidazole: step 1/2. Catalyzes the synthesis of alpha-ribazole-5'-phosphate from nicotinate mononucleotide (NAMN) and 5,6-dimethylbenzimidazole (DMB). In Cupriavidus necator (strain ATCC 17699 / DSM 428 / KCTC 22496 / NCIMB 10442 / H16 / Stanier 337) (Ralstonia eutropha), this protein is Nicotinate-nucleotide--dimethylbenzimidazole phosphoribosyltransferase.